We begin with the raw amino-acid sequence, 339 residues long: DNA-directed RNA polymerase subunit alpha (339 aa).

Positions 1–233 are alpha N-terminal domain (alpha-NTD); that stretch reads MVREEVAGST…DLFLPFLHAE (233 aa). The interval 264-339 is alpha C-terminal domain (alpha-CTD); that stretch reads KKGIPLNYIF…IDLLKNKLSF (76 aa).

It belongs to the RNA polymerase alpha chain family. As to quaternary structure, in plastids the minimal PEP RNA polymerase catalytic core is composed of four subunits: alpha, beta, beta', and beta''. When a (nuclear-encoded) sigma factor is associated with the core the holoenzyme is formed, which can initiate transcription.

Its subcellular location is the plastid. The protein resides in the chloroplast. It catalyses the reaction RNA(n) + a ribonucleoside 5'-triphosphate = RNA(n+1) + diphosphate. Functionally, DNA-dependent RNA polymerase catalyzes the transcription of DNA into RNA using the four ribonucleoside triphosphates as substrates. In Psathyrostachys rupestris (Hordeum rupestre), this protein is DNA-directed RNA polymerase subunit alpha.